The sequence spans 176 residues: Disulfide bond formation protein B (176 aa).

Topologically, residues Met-1–Ala-14 are cytoplasmic. The chain crosses the membrane as a helical span at residues Trp-15–Tyr-31. Residues Phe-32–Cys-49 lie on the Periplasmic side of the membrane. Cys-41 and Cys-44 are joined by a disulfide. Residues Ala-50–Pro-65 form a helical membrane-spanning segment. Topologically, residues Ala-66–Phe-71 are cytoplasmic. Residues Ser-72–Met-89 traverse the membrane as a helical segment. Residues Lys-90–Gln-144 lie on the Periplasmic side of the membrane. Cys-104 and Cys-130 are joined by a disulfide. The chain crosses the membrane as a helical span at residues Trp-145–Ala-163. Over Gln-164–Arg-176 the chain is Cytoplasmic.

It belongs to the DsbB family.

It is found in the cell inner membrane. Required for disulfide bond formation in some periplasmic proteins. Acts by oxidizing the DsbA protein. The polypeptide is Disulfide bond formation protein B (Sodalis glossinidius (strain morsitans)).